We begin with the raw amino-acid sequence, 241 residues long: Endodeoxyribonuclease NucC (241 aa).

Active-site residues include Asp-73, Glu-104, and Lys-106. Mg(2+) is bound by residues Asp-73 and Glu-104.

The protein belongs to the NucC endonuclease family. Self-oligomerizes. Forms homotrimers; in the presence of cAAA the trimers associate face-to-face to form homohexamers. The 2 cAAA-binding sites are on the exterior of the hexamer at the three-way junction, there are maximally 2 cyclic nucleotides per hexamer. Requires Mg(2+) as cofactor.

Activated by cAAA and to a lesser extent cAA and cAAG; cAAA and cAA are products of its cognate CD-NTase. Cyclic nucleotide binding causes hexamerization. Cyclic nucleotide binding causes a series of shifts that enclose the cAAA molecule, enable hexamer formation and juxtapose pairs of active sites to allow dsDNA cleavage. Its function is as follows. Effector DNase of a CBASS antivirus system. CBASS (cyclic oligonucleotide-based antiphage signaling system) provides immunity against bacteriophage. The CD-NTase protein synthesizes cyclic nucleotides in response to infection; these serve as specific second messenger signals. The signals activate a diverse range of effectors, leading to bacterial cell death and thus abortive phage infection. A type III-C(AAA) CBASS system. Functionally, a cyclic nucleotide-activated dsDNase. In the presence of 3',3',3'-cyclic AMP-AMP-AMP (cAAA), and to a lesser extent 3',3',3'-cyclic AMP-AMP-GMP (cAAG) and cyclic-di-AMP (c-di-AMP), endonucleolytically degrades dsDNA. Binds one cAAA in a pocket on one surface of the trimer; cAAA binding promotes hexamerization, which is necessary for nuclease activation. Also binds c-diAMP or linear di-AMP with lower affinity. The nuclease digests dsDNA to about 50 bp lengths with a 2-base 3' overhang and a consensus recognition site of 5'-Axx|T-3'. DNA has been modeled to contact a pair of juxtaposed active sites (one from each layer of the hexamer), accounting for cleavage on both strands and the 2-base overhang. In terms of biological role, protects E.coli strain JP313 against bacteriophage lambda cI- infection. When the cdnC-cap7-cap6-nucC operon is transformed into a susceptible strain it confers bacteriophage immunity. Mutations in the sensor (Cap7 also called HORMA) or effector proteins (CdnC, NucC) but not the disassembly protein (Cap6 also called Trip13) no longer confer immunity. The presence of the intact operon leads to culture collapse and cell death which occurs before the phage has finished its replication cycle, thus protecting non-infected bacteria by aborting the phage infection and preventing its propagation. This chain is Endodeoxyribonuclease NucC, found in Escherichia coli (strain MS 115-1).